A 349-amino-acid chain; its full sequence is 3-dehydroquinate synthase (349 aa).

NAD(+)-binding positions include 63–68 (DGEEYK), 97–101 (GVIGD), 121–122 (TT), K134, K143, and 161–164 (FLTT). 3 residues coordinate Zn(2+): E176, H235, and H252.

The protein belongs to the sugar phosphate cyclases superfamily. Dehydroquinate synthase family. Requires Co(2+) as cofactor. Zn(2+) is required as a cofactor. NAD(+) serves as cofactor.

The protein localises to the cytoplasm. The enzyme catalyses 7-phospho-2-dehydro-3-deoxy-D-arabino-heptonate = 3-dehydroquinate + phosphate. Its pathway is metabolic intermediate biosynthesis; chorismate biosynthesis; chorismate from D-erythrose 4-phosphate and phosphoenolpyruvate: step 2/7. Its function is as follows. Catalyzes the conversion of 3-deoxy-D-arabino-heptulosonate 7-phosphate (DAHP) to dehydroquinate (DHQ). This is 3-dehydroquinate synthase from Sulfurimonas denitrificans (strain ATCC 33889 / DSM 1251) (Thiomicrospira denitrificans (strain ATCC 33889 / DSM 1251)).